The primary structure comprises 263 residues: 3-deoxy-manno-octulosonate cytidylyltransferase (263 aa).

The protein belongs to the KdsB family.

Its subcellular location is the cytoplasm. The catalysed reaction is 3-deoxy-alpha-D-manno-oct-2-ulosonate + CTP = CMP-3-deoxy-beta-D-manno-octulosonate + diphosphate. The protein operates within nucleotide-sugar biosynthesis; CMP-3-deoxy-D-manno-octulosonate biosynthesis; CMP-3-deoxy-D-manno-octulosonate from 3-deoxy-D-manno-octulosonate and CTP: step 1/1. It functions in the pathway bacterial outer membrane biogenesis; lipopolysaccharide biosynthesis. In terms of biological role, activates KDO (a required 8-carbon sugar) for incorporation into bacterial lipopolysaccharide in Gram-negative bacteria. The protein is 3-deoxy-manno-octulosonate cytidylyltransferase of Burkholderia cenocepacia (strain HI2424).